We begin with the raw amino-acid sequence, 416 residues long: Glutamyl-tRNA reductase (416 aa).

Substrate-binding positions include 49-52 (TCNR), S105, 110-112 (EPQ), and Q116. The Nucleophile role is filled by C50. 185–190 (GAGETI) is an NADP(+) binding site.

Belongs to the glutamyl-tRNA reductase family. Homodimer.

It carries out the reaction (S)-4-amino-5-oxopentanoate + tRNA(Glu) + NADP(+) = L-glutamyl-tRNA(Glu) + NADPH + H(+). Its pathway is porphyrin-containing compound metabolism; protoporphyrin-IX biosynthesis; 5-aminolevulinate from L-glutamyl-tRNA(Glu): step 1/2. Catalyzes the NADPH-dependent reduction of glutamyl-tRNA(Glu) to glutamate 1-semialdehyde (GSA). This Shewanella piezotolerans (strain WP3 / JCM 13877) protein is Glutamyl-tRNA reductase.